The following is a 418-amino-acid chain: Nucleoredoxin (418 aa).

The Thioredoxin domain maps to 109 to 309 (KYKVTSIPSL…ESNAVQLHEG (201 aa)).

This sequence belongs to the nucleoredoxin family.

The protein localises to the cytoplasm. Its subcellular location is the cytosol. The protein resides in the nucleus. The enzyme catalyses [protein]-dithiol + NAD(+) = [protein]-disulfide + NADH + H(+). The catalysed reaction is [protein]-dithiol + NADP(+) = [protein]-disulfide + NADPH + H(+). In terms of biological role, functions as a redox-dependent negative regulator of the Wnt signaling pathway. This chain is Nucleoredoxin (nxn), found in Danio rerio (Zebrafish).